We begin with the raw amino-acid sequence, 942 residues long: MINYKNTLNLPYTLFPMRANLPVCEPTILERWYKDNLYEAIRHKKSKKKLFILHDGPPYVNGSIHLGHAVNKVLKDIILKYKTLTGYNAPYIPGWDCHGLPIELQVERLIGQLGVNVDPNEFRSICRNYVLDQIEIQKKDFVRLGVLGDWSRPYLTMDFKTEANIIRTLSKVISNGYFYKGTKPVHWCFQCCSVLAESEVEYNNHCSPAIDVAFFAVDNIRISKIFNIDLCQRVIELVIWTTTPWTLPSNQAISVHPDYSYQLIAINNSKYIIIAANLVNTVMQRIQCFSWRILGETSGNSLESLKFRHPFMSFDVPVVLSGHVALDSGTGVVHIAPNHGVDDYIIARKYNFKIVNIINETGHYVSNVHPMLDGVQVFQSNEIIIKLLNQSGSLLHVNHNYKHNYPYCWRHAVPVIFKATAQWFLSMDKYNLRNKLLQTIHQVDWIPNKGEYSIETMIVNRPDWCLSRQRVWGVPIPLFIHKKTSILHPRTIALMEVIAQHVEQNGIQAWWDLKTEDIIDNEEADQYEKVLDTLDVWFDSGSTHYSVIPERLEYRKQSPDLYLEGSDQYRGWFMSSLIISTVITGQAPYREVLTHGFTVDAQGRKMSKSLGNVISPQEIIKDFGADILRLWIASSDYSKEMAISNAILKHTIDVYRRIRNTARFCLANISDFDPEKDSVHPENMIELDCWAIDRALSVQLEVISDYNKYNFHNVIQRIMQFCSVEMGSFYLDVIKDRQYTTKKNSKERRSCQTALYHIIESMVRWIAPVLSFTADEIWRHIPGNRSKYVFTEEWYNGLFSISSKQIMNSHDWNTFLNVRSEVNKIVEQTRLNGIIGGSLDASVVLYATPELANTLRILGNELSFGLITSSAIVSDYCNGFNVTQYTQEGIPGLKIFLEKAKGKKCLRCWHYRLDIGQYKNYSNICARCVNNIVGPGEKRRFF.

The 'HIGH' region motif lies at 58-68 (PYVNGSIHLGH). E564 lines the L-isoleucyl-5'-AMP pocket. Residues 605–609 (KMSKS) carry the 'KMSKS' region motif. An ATP-binding site is contributed by K608. Residues C905, C908, C925, and C928 each contribute to the Zn(2+) site.

The protein belongs to the class-I aminoacyl-tRNA synthetase family. IleS type 1 subfamily. As to quaternary structure, monomer. Requires Zn(2+) as cofactor.

Its subcellular location is the cytoplasm. It carries out the reaction tRNA(Ile) + L-isoleucine + ATP = L-isoleucyl-tRNA(Ile) + AMP + diphosphate. Its function is as follows. Catalyzes the attachment of isoleucine to tRNA(Ile). As IleRS can inadvertently accommodate and process structurally similar amino acids such as valine, to avoid such errors it has two additional distinct tRNA(Ile)-dependent editing activities. One activity is designated as 'pretransfer' editing and involves the hydrolysis of activated Val-AMP. The other activity is designated 'posttransfer' editing and involves deacylation of mischarged Val-tRNA(Ile). This is Isoleucine--tRNA ligase from Blochmanniella pennsylvanica (strain BPEN).